Here is a 352-residue protein sequence, read N- to C-terminus: MYKGLLKQYASYLPVNEKTPDVSLMEGNTPLIPLLNISKQLGVQLYGKYEGANPTGSFKDRGMVMAVAKAKEEGSEAIICASTGNTSASAAAYAARLGMKCIIVIPEGKIAHGKLAQAVAYGAEIISIEGNFDDALKAVRNIAAEEPITLVNSVNPYRIEGQKTAAFEICDQLQNAPDVLAIPVGNAGNITAYWKGFCEYEKEKGYKKPRIHGFEAEGAAAIVKGHVIEEPETIATAIRIGNPASWSYAVEAAEQSHGEIDMVSDEEILHAYRLLAKTEGVFAEPGSNASLAGVIKHVESGKIKKGETVVAVLTGNGLKDPDIAISSNQLDIASVSNDIEQIKDHIKGVIMS.

Lysine 59 carries the post-translational modification N6-(pyridoxal phosphate)lysine. Residues asparagine 85, 185–189 (GNAGN), and threonine 314 each bind pyridoxal 5'-phosphate.

The protein belongs to the threonine synthase family. Pyridoxal 5'-phosphate is required as a cofactor.

It carries out the reaction O-phospho-L-homoserine + H2O = L-threonine + phosphate. It participates in amino-acid biosynthesis; L-threonine biosynthesis; L-threonine from L-aspartate: step 5/5. Catalyzes the gamma-elimination of phosphate from L-phosphohomoserine and the beta-addition of water to produce L-threonine. In Bacillus sp. (strain ULM1), this protein is Threonine synthase (thrC).